The following is a 187-amino-acid chain: Elongation factor P (187 aa).

The protein belongs to the elongation factor P family.

It is found in the cytoplasm. Its pathway is protein biosynthesis; polypeptide chain elongation. Involved in peptide bond synthesis. Stimulates efficient translation and peptide-bond synthesis on native or reconstituted 70S ribosomes in vitro. Probably functions indirectly by altering the affinity of the ribosome for aminoacyl-tRNA, thus increasing their reactivity as acceptors for peptidyl transferase. This Parafrankia sp. (strain EAN1pec) protein is Elongation factor P.